Consider the following 263-residue polypeptide: uncharacterized protein (263 aa).

Residues 198–224 are disordered; that stretch reads KRSSDSFVSLKPGEDEHSPLEISTCGN.

This is an uncharacterized protein from Saccharomyces cerevisiae (strain ATCC 204508 / S288c) (Baker's yeast).